We begin with the raw amino-acid sequence, 180 residues long: MDYFSESIKKAIRTVPDWPKPGVSFRDITTVLQDKTAFRKLIDAFVHRYHGQHIDAVAAVDARGFIIGSALAYELNASLVLVRKKGKLPFDTLVEDYELEYGTASVELHEDAFKPGDKVILVDDLIATGGTMLAATRLIRRIGAEIVEVAAMIDLPDLGGSRKLQEEGLQVYTVCSFEGD.

This sequence belongs to the purine/pyrimidine phosphoribosyltransferase family. In terms of assembly, homodimer.

The protein localises to the cytoplasm. The catalysed reaction is AMP + diphosphate = 5-phospho-alpha-D-ribose 1-diphosphate + adenine. The protein operates within purine metabolism; AMP biosynthesis via salvage pathway; AMP from adenine: step 1/1. Catalyzes a salvage reaction resulting in the formation of AMP, that is energically less costly than de novo synthesis. This is Adenine phosphoribosyltransferase from Marinobacter nauticus (strain ATCC 700491 / DSM 11845 / VT8) (Marinobacter aquaeolei).